A 235-amino-acid chain; its full sequence is High affinity immunoglobulin epsilon receptor subunit beta (235 aa).

Positions 1–23 are disordered; it reads MDTENRSRADLALPNPQESSSAP. Over 1–51 the chain is Cytoplasmic; it reads MDTENRSRADLALPNPQESSSAPDIELLEASPAKAAPPKQTWRTFLKKELE. Residues 52–71 traverse the membrane as a helical segment; that stretch reads FLGATQILVGLICLCFGTIV. Residues 72 to 89 are Extracellular-facing; it reads CSVLYVSDFDEEVLLLYK. The helical transmembrane segment at 90-109 threads the bilayer; it reads LGYPFWGAVLFVLSGFLSII. Residues 110–122 lie on the Cytoplasmic side of the membrane; it reads SERKNTLYLVRGS. A helical membrane pass occupies residues 123-142; that stretch reads LGANIVSSIAAGTGIAMLIL. Residues 143–171 lie on the Extracellular side of the membrane; it reads NLTNNFAYMNNCKNVTEDDGCFVASFTTE. Residues 172–191 form a helical membrane-spanning segment; the sequence is LVLMMLFLTILAFCSAVLFT. Residues 192 to 235 are Cytoplasmic-facing; the sequence is IYRIGQELESKKVPDDRLYEELNVYSPIYSELEDKGETSSPVDS. Residues Tyr-210 and Tyr-216 each carry the phosphotyrosine modification. Ser-217 carries the post-translational modification Phosphoserine. Phosphotyrosine is present on Tyr-220.

This sequence belongs to the MS4A family. In terms of assembly, tetramer of an alpha chain, a beta chain, and two disulfide linked gamma chains. Binds LILRB1. Interacts with FGR. Interacts with FGR and FES/FPS. Interacts with LYN. In terms of processing, phosphorylated on tyrosine residues by LYN.

It localises to the membrane. In terms of biological role, high affinity receptor that binds to the Fc region of immunoglobulins epsilon. Aggregation of FCER1 by multivalent antigens is required for the full mast cell response, including the release of preformed mediators (such as histamine) by degranulation and de novo production of lipid mediators and cytokines. Also mediates the secretion of important lymphokines. Binding of allergen to receptor-bound IgE leads to cell activation and the release of mediators responsible for the manifestations of allergy. The chain is High affinity immunoglobulin epsilon receptor subunit beta (Ms4a2) from Mus musculus (Mouse).